The sequence spans 220 residues: MKKADNEHLARMRVEYGSVEKDGSADLDVDWLADGWVALLRRWLADAEAAGIAEPNAIVLGTVDAGGRPVTRTVLCKSVDDTGITFFTNYGSAKGEDLASTPYASATFPWFALGRQVHVRGPVTKVSAEETADYWSKRPRGSQLGAWASQQSRPIASRAELLDQLAEVTERFADHDTVPVPPDWGGYRITAEVVEFWQGRESRVHNRIRVHDGRIERLQP.

Substrate contacts are provided by residues 13 to 16 (RVEY) and Lys77. FMN contacts are provided by residues 72 to 77 (RTVLCK), 87 to 88 (FT), Lys94, and Gln116. Residues Tyr134, Arg138, and Ser142 each coordinate substrate. FMN-binding positions include 151–152 (QS) and Trp197. Residue 203–205 (RVH) participates in substrate binding. Arg207 is a binding site for FMN.

It belongs to the pyridoxamine 5'-phosphate oxidase family. As to quaternary structure, homodimer. FMN serves as cofactor.

It catalyses the reaction pyridoxamine 5'-phosphate + O2 + H2O = pyridoxal 5'-phosphate + H2O2 + NH4(+). The catalysed reaction is pyridoxine 5'-phosphate + O2 = pyridoxal 5'-phosphate + H2O2. Its pathway is cofactor metabolism; pyridoxal 5'-phosphate salvage; pyridoxal 5'-phosphate from pyridoxamine 5'-phosphate: step 1/1. It participates in cofactor metabolism; pyridoxal 5'-phosphate salvage; pyridoxal 5'-phosphate from pyridoxine 5'-phosphate: step 1/1. Functionally, catalyzes the oxidation of either pyridoxine 5'-phosphate (PNP) or pyridoxamine 5'-phosphate (PMP) into pyridoxal 5'-phosphate (PLP). This Mycobacterium sp. (strain KMS) protein is Pyridoxine/pyridoxamine 5'-phosphate oxidase.